The following is a 306-amino-acid chain: UDP-3-O-acyl-N-acetylglucosamine deacetylase (306 aa).

Zn(2+) is bound by residues His-79, His-238, and Asp-242. His-265 functions as the Proton donor in the catalytic mechanism.

Belongs to the LpxC family. Zn(2+) serves as cofactor.

It catalyses the reaction a UDP-3-O-[(3R)-3-hydroxyacyl]-N-acetyl-alpha-D-glucosamine + H2O = a UDP-3-O-[(3R)-3-hydroxyacyl]-alpha-D-glucosamine + acetate. The protein operates within glycolipid biosynthesis; lipid IV(A) biosynthesis; lipid IV(A) from (3R)-3-hydroxytetradecanoyl-[acyl-carrier-protein] and UDP-N-acetyl-alpha-D-glucosamine: step 2/6. Its function is as follows. Catalyzes the hydrolysis of UDP-3-O-myristoyl-N-acetylglucosamine to form UDP-3-O-myristoylglucosamine and acetate, the committed step in lipid A biosynthesis. In Shewanella piezotolerans (strain WP3 / JCM 13877), this protein is UDP-3-O-acyl-N-acetylglucosamine deacetylase.